Here is a 1358-residue protein sequence, read N- to C-terminus: MGNQLAGIAPSQILSVESYFSDIHDFEYDKSLGSTRFFKVARAKHREGLVVVKVFAIQDPTLPLTSYKQELEELKIRLNSAQNCLPFQKASEKASEKAAMLFRQYVRDNLYDRISTRPFLNNIENRWIAFQILTAVDQAHKPGVRHGDIKTENVMVTSWNWVLLTDFASFKPTYLPEDNPADFNYFFDTSRRRTCYIAPERFVDGGMFATELEYMRDPSTPLVDLNSNQRTRGELKRAMDIFSAGCVIAELFTEGVPLFDLSQLLAYRNGHFFPEQVLNKIEDHSIRELVTQMIHREPDKRLEAEDYLKQQRGNAFPEIFYTFLQPYMAQFAKETFLSADERILVIRKDLGNIIHNLCGHDLPEKTEEEPKENGLVILVSVITSCLQTLKYYDSKLAALELILHLAPRLGVEILLDRITPYLLHFSNDSVPRVRAEALRTLTKVLALVKEVPRNDINIYPEYILPGIAHLAQDDATIVRLAYAENIALLAETALRFLELVQLKNLNMENDPNNEEIDEVTHPNGNYDTELQALHEMVQQKVVTLLSDPENIVKQTLMENGITRLCVFFGRQKANDVLLSHMITFLNDKNDWHLRGAFFDSIVGVAAYVGWQSSSILKPLLQQGLSDAEEFVIVKALYALTCMCQLGLLQKPHVYEFASDIAPFLCHPNLWIRYGAVGFVTVVARQISTADVYCKLMPYLDPYITQPIIQIERKLVLLSVLKEPVSRSIFDYALRSKDITSLFRHLHMRQKKRNGSLPDCPPPEDPAIAQLLKKLLSQGMTEDEEDKLLALKDFMMKSNKAKANIVDQSHLHDSSQKGVIDLAALGITGRQVDLVKTKQEPDDKRARKHVKQDSNVNEEWKSMFGSLDPPNMPQALPKGSDQEVIQTGKPPRSESSAGICVPLSTSPQVPEVTTIQNKKPVIPVLSSTILPSTYQIRITTCKTELQQLIQQKREQCNAERIAKQMMENAEWESKPPPPGWRPKGLLVAHLHEHKSAVNRIRVSDEHSLFATCSNDGTVKIRNSQKMEGKTTTTRSILTYSRVGGRVKTLTFCQGSHYLAIASDNGAVQLLGIEASKLPKSPKIHPLQSRILDQKEDGCVVDMHHFNSGAQSVLAYATVNGSLVGWDLRSSSNAWTLKHDLKSGLITSFAVDIHQCWLCIGTSSGTMACWDMRFQLPISSHCHPSRARIRRLSMHPLYQSWVIAAVQGNNEVSMWDMETGDRRFTLWASSAPPLSELQPSPHSVHGIYCSPADGNPILLTAGSDMKIRFWDLAYPERSYVVAGSTSSPSVSYYRKIIEGTEVVQEIQNKQKVGPSDDTPRRGPESLPVGHHDIITDVATFQTTQGFIVTASRDGIVKVWK.

A lipid anchor (N-myristoyl glycine) is attached at Gly2. The Protein kinase domain maps to 26 to 324 (FEYDKSLGST…AFPEIFYTFL (299 aa)). ATP contacts are provided by residues 32–40 (LGSTRFFKV) and Lys53. Asp148 (proton acceptor) is an active-site residue. HEAT repeat units follow at residues 373 to 411 (NGLV…RLGV), 413 to 450 (ILLD…LVKE), 458 to 495 (IYPE…TALR), 531 to 570 (QALH…FFGR), 572 to 610 (KAND…YVGW), 612 to 648 (SSSI…LGLL), and 690 to 726 (DVYC…PVSR). Residues Ser808, Ser813, Ser853, and Ser865 each carry the phosphoserine modification. Residues 875 to 899 (LPKGSDQEVIQTGKPPRSESSAGIC) form a disordered region. WD repeat units lie at residues 991–1030 (EHKS…GKTT), 1040–1079 (RVGG…LPKS), 1093–1134 (KEDG…NAWT), 1139–1178 (LKSG…PISS), 1182–1223 (PSRA…RRFT), and 1237–1278 (PSPH…RSYV). The interval 1307 to 1326 (KQKVGPSDDTPRRGPESLPV) is disordered. Basic and acidic residues predominate over residues 1315–1326 (DTPRRGPESLPV). Thr1316 bears the Phosphothreonine mark. One copy of the WD 7 repeat lies at 1327 to 1358 (GHHDIITDVATFQTTQGFIVTASRDGIVKVWK).

It belongs to the protein kinase superfamily. Ser/Thr protein kinase family. In terms of assembly, component of the PI3K (PI3KC3/PI3K-III/class III phosphatidylinositol 3-kinase) complex the core of which is composed of the catalytic subunit PIK3C3, the regulatory subunit PIK3R4 and BECN1 associating with additional regulatory/auxiliary subunits to form alternative complex forms. Alternative complex forms containing a fourth regulatory subunit in a mutually exclusive manner are PI3K complex I (PI3KC3-C1) containing ATG14, and PI3K complex II (PI3KC3-C2) containing UVRAG. PI3KC3-C1 displays a V-shaped architecture with PIK3R4 serving as a bridge between PIK3C3 and the ATG14:BECN1 subcomplex. Both, PI3KC3-C1 and PI3KC3-C2, can associate with further regulatory subunits, such as RUBCN, SH3GLB1/Bif-1, AMBRA1 and NRBF2. PI3KC3-C1 probably associates with PIK3CB. Interacts with RAB7A in the presence of PIK3C3/VPS34. Interacts with NRBF2. Interacts with ARMC3. Requires Mn(2+) as cofactor. In terms of processing, myristoylated. Probably autophosphorylated.

It is found in the late endosome. Its subcellular location is the cytoplasmic vesicle. The protein resides in the autophagosome. It localises to the membrane. It carries out the reaction L-seryl-[protein] + ATP = O-phospho-L-seryl-[protein] + ADP + H(+). The catalysed reaction is L-threonyl-[protein] + ATP = O-phospho-L-threonyl-[protein] + ADP + H(+). In terms of biological role, regulatory subunit of the PI3K complex that mediates formation of phosphatidylinositol 3-phosphate; different complex forms are believed to play a role in multiple membrane trafficking pathways: PI3KC3-C1 is involved in initiation of autophagosomes and PI3KC3-C2 in maturation of autophagosomes and endocytosis. Involved in regulation of degradative endocytic trafficking and cytokinesis, probably in the context of PI3KC3-C2. Its function is as follows. Regulatory subunit of the PI3K complex. May regulate membrane trafficking late in the endocytic pathway. This is Phosphoinositide 3-kinase regulatory subunit 4 (PIK3R4) from Pongo abelii (Sumatran orangutan).